The primary structure comprises 337 residues: MRVLGIETSCDETGVAIYDDAAGLLANQLYSQVKLHADYGGVVPELASRDHVRKTVPLIQAALQEAGLQAQDIDAVAYTAGPGLVGALLVGATIGRSLAFAWDVPAIAVHHMEGHLLAPMLEDNPPEFPFVALLVSGGHTQLISVTGIGSYTLMGESIDDAAGEAFDKTAKLLGLDYPGGPMLSKMAQQGVEKRFVFPRPMTDRPGLDFSFSGLKTFAANTIRDNDDSSQTHADIARAFEDAVVDTLAIKCRRALDQSGFKRLVIAGGVSANRTLRAKLAEMMQKRGGEVFYARPEFCTDNGAMIAYAGMVRLKGGTHAELSVTVRPRWPLAELPAI.

Fe cation-binding residues include His111 and His115. Substrate-binding positions include 134-138 (LVSGG), Asp167, Gly180, and Asn272. A Fe cation-binding site is contributed by Asp300.

Belongs to the KAE1 / TsaD family. Requires Fe(2+) as cofactor.

It localises to the cytoplasm. The enzyme catalyses L-threonylcarbamoyladenylate + adenosine(37) in tRNA = N(6)-L-threonylcarbamoyladenosine(37) in tRNA + AMP + H(+). In terms of biological role, required for the formation of a threonylcarbamoyl group on adenosine at position 37 (t(6)A37) in tRNAs that read codons beginning with adenine. Is involved in the transfer of the threonylcarbamoyl moiety of threonylcarbamoyl-AMP (TC-AMP) to the N6 group of A37, together with TsaE and TsaB. TsaD likely plays a direct catalytic role in this reaction. The chain is tRNA N6-adenosine threonylcarbamoyltransferase from Erwinia tasmaniensis (strain DSM 17950 / CFBP 7177 / CIP 109463 / NCPPB 4357 / Et1/99).